The sequence spans 1101 residues: Nuclear pore complex protein NUP107 (1101 aa).

The protein belongs to the nucleoporin Nup84/Nup107 family. In terms of assembly, part of the nuclear pore complex (NPC). The NPC has an eight-fold symmetrical structure comprising a central transport channel and two rings, the cytoplasmic and nuclear rings, to which eight filaments are attached. The cytoplasmic filaments have loose ends, while the nuclear filaments are joined in a distal ring, forming a nuclear basket. NPCs are highly dynamic in configuration and composition, and can be devided in 3 subcomplexes, the NUP62 subcomplex, the NUP107-160 subcomplex and the NUP93 subcomplex, containing approximately 30 different nucleoporin proteins.

Its subcellular location is the nucleus envelope. The protein resides in the nucleus. It localises to the nuclear pore complex. This is Nuclear pore complex protein NUP107 from Arabidopsis thaliana (Mouse-ear cress).